Consider the following 331-residue polypeptide: FMRFamide-related neuropeptides (331 aa).

A signal peptide spans 1–25 (MRCWSPCSLLVVIAIYCLSSHTSEA). A propeptide spanning residues 26-65 (FDLAQACVESQRLSLLPICDTIFAVQQEGAQQSADDGLRS) is cleaved from the precursor. 2 positions are modified to phenylalanine amide: Phe71 and Phe83. Residues 86 to 94 (NVPDLPFED) constitute a propeptide that is removed on maturation. The residue at position 100 (Phe100) is a Phenylalanine amide. The propeptide occupies 103–168 (AAPQLDDLLK…YVDDVEDSDV (66 aa)). A disordered region spans residues 122 to 153 (QKSDDTSVRRKRSTDAAPQSNTDSAEQKNDSA). A phenylalanine amide mark is found at Phe174 and Phe181. Positions 184 to 194 (NPSDVGSKLTE) are excised as a propeptide. Phe200 carries the phenylalanine amide modification. Residues 203–205 (DPE) constitute a propeptide that is removed on maturation. Phe211 carries the phenylalanine amide modification. Residues 214-216 (SDD) constitute a propeptide that is removed on maturation. Phe222 carries the phenylalanine amide modification. The propeptide occupies 225 to 236 (NPGDAEDELEED). Phe242 bears the Phenylalanine amide mark. A propeptide spanning residues 245-254 (GDEEDEEEAE) is cleaved from the precursor. The residue at position 260 (Phe260) is a Phenylalanine amide. The propeptide occupies 263–265 (DPE). Phe271 is modified (phenylalanine amide). Residues 274 to 277 (NGEE) constitute a propeptide that is removed on maturation. The residue at position 283 (Phe283) is a Phenylalanine amide. Residues 286-293 (NPEEPEAD) constitute a propeptide that is removed on maturation. Position 299 is a phenylalanine amide (Phe299). Residues 302–312 (GGEEDDVNTEE) constitute a propeptide that is removed on maturation. Phe318 carries the post-translational modification Phenylalanine amide. The propeptide occupies 321–331 (SAEKCKGCLEG).

Belongs to the FARP (FMRFamide related peptide) family. Present ubiquitously in the brain and regions of the central nervous system as well as in the periphery and throughout the dermal chromatophore layer (at protein level).

It is found in the secreted. In terms of biological role, excitatory neurotransmitters that directly modulate chromatophore function by activating chromatophore expansion at the chromatophore neuromuscular junction. In Sepia officinalis (Common cuttlefish), this protein is FMRFamide-related neuropeptides.